Reading from the N-terminus, the 1571-residue chain is Disco-interacting protein 2 homolog A (1571 aa).

Positions Glu9–Ser127 constitute a DMAP1-binding domain. A disordered region spans residues Leu60–Ala203. The span at Ala86–Thr98 shows a compositional bias: basic and acidic residues. At Ser94 the chain carries Phosphoserine. Composition is skewed to polar residues over residues Ser127–Ala139 and Leu152–Ser162. 2 positions are modified to phosphothreonine: Thr132 and Thr155. Low complexity predominate over residues Ser174–Ala203. Short sequence motifs (PXXP motif; required for interaction with CTTN) lie at residues Pro283–Pro286 and Pro307–Pro310. Residues Val302 to Ala327 are disordered.

It belongs to the DIP2 family. Interacts with FSTL1; DIP2A may act as a cell surface receptor for FSTL1. Interacts (via N-terminus) with CTTN (via SH3 domain); the interaction promotes acetylation of CTTN and is required for proper synaptic transmission. Interacts with SHANK3. Low expression in all tissues tested.

Its subcellular location is the cell membrane. The protein resides in the mitochondrion. It is found in the cell projection. The protein localises to the dendritic spine. It carries out the reaction acetate + ATP + CoA = acetyl-CoA + AMP + diphosphate. Catalyzes the de novo synthesis of acetyl-CoA in vitro. Promotes acetylation of CTTN, possibly by providing the acetyl donor, ensuring correct dendritic spine morphology and synaptic transmission. Binds to follistatin-related protein FSTL1 and may act as a cell surface receptor for FSTL1, contributing to AKT activation and subsequent FSTL1-induced survival and function of endothelial cells and cardiac myocytes. The protein is Disco-interacting protein 2 homolog A (DIP2A) of Homo sapiens (Human).